Reading from the N-terminus, the 308-residue chain is Ecto-ADP-ribosyltransferase 5 (308 aa).

An N-terminal signal peptide occupies residues 1-23; it reads MILEDLLMVLSCLALHILWKVQA. A disulfide bond links C43 and C259. One can recognise a TR mART core domain in the interval 63–253; that stretch reads ALLRESWEAA…IVTLWSYNQT (191 aa). Y100 contacts NAD(+). N-linked (GlcNAc...) asparagine glycosylation occurs at N102. The NAD(+) site is built by R161 and Q181. R161 is a catalytic residue. S184 is a catalytic residue. An N-linked (GlcNAc...) asparagine glycan is attached at N197. Position 215 (S215) interacts with NAD(+). E222 is an active-site residue. N-linked (GlcNAc...) asparagine glycosylation is present at N251.

This sequence belongs to the Arg-specific ADP-ribosyltransferase family.

The protein localises to the secreted. It is found in the membrane. It carries out the reaction L-arginyl-[protein] + NAD(+) = N(omega)-(ADP-D-ribosyl)-L-arginyl-[protein] + nicotinamide + H(+). The protein is Ecto-ADP-ribosyltransferase 5 (Art5) of Rattus norvegicus (Rat).